A 429-amino-acid chain; its full sequence is MTVTPIRAKEELKYEIKDISLAPSGRQRIEWAGREMPVVKQIKDRFEKEKPFEGIRLIACCHVTTETANLAIALKAGGADAVLIASNPLSTQDDVAACLVADYGIPVFAIKGEDNATYHRHVQIALDHKPNLIIDDGGDVTATLIQERKDQIADIIGTTEETTTGIVRLAAMLKDGVLSFPAMNVNDADTKHFFDNRYGTGQSTLDGIIRATNVLLAGKTVVVAGYGWCGKGTAMRARGLGANVIVTEINAVKAIEAVMDGFRVMPMIEAAPLGDLFVTVTGNKHVIRPEHFDVMKDGAIVCNSGHFDIEIDLQSLGEKASEIKEVRNFTQQYTLASGKSIVVLGEGRLINLAAAEGHPSAVMDMSFANQALACEYLVKNKGKLEPGIYNIPTEIDQEIARLKLQGMGISIDSLTPEQEAYLNSWTSGT.

3 residues coordinate substrate: Thr64, Asp136, and Glu161. An NAD(+)-binding site is contributed by 162 to 164 (TTT). Lys191 and Asp195 together coordinate substrate. NAD(+) contacts are provided by residues Asn196, 225–230 (GYGWCG), Glu248, Asn283, 304–306 (SGH), and Asn351.

Belongs to the adenosylhomocysteinase family. NAD(+) is required as a cofactor.

Its subcellular location is the cytoplasm. The enzyme catalyses S-adenosyl-L-homocysteine + H2O = L-homocysteine + adenosine. Its pathway is amino-acid biosynthesis; L-homocysteine biosynthesis; L-homocysteine from S-adenosyl-L-homocysteine: step 1/1. In terms of biological role, may play a key role in the regulation of the intracellular concentration of adenosylhomocysteine. This chain is Adenosylhomocysteinase, found in Gloeothece citriformis (strain PCC 7424) (Cyanothece sp. (strain PCC 7424)).